Reading from the N-terminus, the 75-residue chain is Putative membrane protein insertion efficiency factor 2 (75 aa).

This sequence belongs to the UPF0161 family.

The protein localises to the cell membrane. In terms of biological role, could be involved in insertion of integral membrane proteins into the membrane. This chain is Putative membrane protein insertion efficiency factor 2, found in Bacillus licheniformis (strain ATCC 14580 / DSM 13 / JCM 2505 / CCUG 7422 / NBRC 12200 / NCIMB 9375 / NCTC 10341 / NRRL NRS-1264 / Gibson 46).